The sequence spans 278 residues: MDVRQSIHSAHAKTLDTQQLRNEFLVEKVFVADEYTMVYSHIDRIIVGGIMPVAKTVSVGGEVGKQLGVSYFLERRELGVINIGGPGTITVDGQCFEIGHRDALYVGKGAQEVVFASVESSKPAKFYYNCAPAHMTYPTKKVTPADVSPVTLGDNLTSNRRTINKYFVPDVLETCQLSMGLTELDPGNLWNTMPCHTHERRMEVYFYFNMDEDACVFHMMGQPQETRHLVMHNEQAVISPSWSIHSGVGTKAYTFIWGMVGENQVFDDMDHVAVKDLR.

Residues histidine 196, histidine 198, glutamate 203, and histidine 245 each coordinate Zn(2+).

This sequence belongs to the KduI family. It depends on Zn(2+) as a cofactor.

It catalyses the reaction 5-dehydro-4-deoxy-D-glucuronate = 3-deoxy-D-glycero-2,5-hexodiulosonate. Its pathway is glycan metabolism; pectin degradation; 2-dehydro-3-deoxy-D-gluconate from pectin: step 4/5. Its function is as follows. Catalyzes the isomerization of 5-dehydro-4-deoxy-D-glucuronate to 3-deoxy-D-glycero-2,5-hexodiulosonate. The chain is 4-deoxy-L-threo-5-hexosulose-uronate ketol-isomerase from Enterobacter sp. (strain 638).